A 661-amino-acid polypeptide reads, in one-letter code: Meiotic coiled-coil protein 1 (661 aa).

Coiled-coil stretches lie at residues 38 to 78 (LDAL…IIEE), 100 to 121 (RAIYNTKKNEAKNMYKEIERLS), 143 to 184 (DIKL…LSIK), 304 to 320 (ELIQSMKQEIGNLEVDL), and 360 to 387 (LKRLQKDFQLLKAKLICALREWEEDNEK). Disordered stretches follow at residues 410 to 446 (QNQENISSNDNSKSSPESSPPARKTTGKIENKKLRNI), 467 to 562 (LIDR…TPAS), and 573 to 592 (LSRTPPKGEFTNSLDDTPTQ). Over residues 414-430 (NISSNDNSKSSPESSPP) the composition is skewed to low complexity. Residues 436–445 (GKIENKKLRN) show a composition bias toward basic and acidic residues. Composition is skewed to polar residues over residues 472–481 (VNQSPDTRSV), 548–562 (HNSVKLTGSSTTPAS), and 582–592 (FTNSLDDTPTQ).

In Schizosaccharomyces pombe (strain 972 / ATCC 24843) (Fission yeast), this protein is Meiotic coiled-coil protein 1 (mcp1).